The chain runs to 1015 residues: Translation initiation factor IF-2 (1015 aa).

4 disordered regions span residues 124 to 144, 159 to 179, 196 to 230, and 250 to 386; these read EKEP…EKKV, EVTV…PKPV, KKEE…KEEE, and IDLA…VSEE. Composition is skewed to basic and acidic residues over residues 196–217 and 265–315; these read KKEE…EKPV and SKEE…DPNG. Residues 514 to 684 enclose the tr-type G domain; the sequence is HRAPIVTVMG…LLEAEMLDLK (171 aa). The interval 523–530 is G1; the sequence is GHVDHGKT. 523-530 lines the GTP pocket; it reads GHVDHGKT. The interval 548–552 is G2; that stretch reads GITQH. A G3 region spans residues 570–573; the sequence is DTPG. GTP-binding positions include 570–574 and 624–627; these read DTPGH and NKID. The segment at 624–627 is G4; sequence NKID. A G5 region spans residues 660–662; sequence SAK.

Belongs to the TRAFAC class translation factor GTPase superfamily. Classic translation factor GTPase family. IF-2 subfamily.

The protein resides in the cytoplasm. In terms of biological role, one of the essential components for the initiation of protein synthesis. Protects formylmethionyl-tRNA from spontaneous hydrolysis and promotes its binding to the 30S ribosomal subunits. Also involved in the hydrolysis of GTP during the formation of the 70S ribosomal complex. The polypeptide is Translation initiation factor IF-2 (Bacteroides fragilis (strain ATCC 25285 / DSM 2151 / CCUG 4856 / JCM 11019 / LMG 10263 / NCTC 9343 / Onslow / VPI 2553 / EN-2)).